A 469-amino-acid chain; its full sequence is Trehalose-6-phosphate synthase (469 aa).

Arg10 provides a ligand contact to D-glucose 6-phosphate. 22–23 (GG) contributes to the UDP-alpha-D-glucose binding site. Positions 77 and 131 each coordinate D-glucose 6-phosphate. 2 residues coordinate UDP-alpha-D-glucose: Arg262 and Lys267. Arg300 contributes to the D-glucose 6-phosphate binding site. UDP-alpha-D-glucose is bound at residue 365-369 (LVAKE).

Belongs to the glycosyltransferase 20 family. Homotetramer.

The catalysed reaction is D-glucose 6-phosphate + UDP-alpha-D-glucose = alpha,alpha-trehalose 6-phosphate + UDP + H(+). Its pathway is glycan biosynthesis; trehalose biosynthesis. Functionally, probably involved in the osmoprotection via the biosynthesis of trehalose. Catalyzes the transfer of glucose from UDP-alpha-D-glucose (UDP-Glc) to D-glucose 6-phosphate (Glc-6-P) to form trehalose-6-phosphate. Acts with retention of the anomeric configuration of the UDP-sugar donor. The chain is Trehalose-6-phosphate synthase from Sodalis glossinidius (strain morsitans).